A 188-amino-acid polypeptide reads, in one-letter code: Pupal cuticle protein Edg-84A (188 aa).

The first 17 residues, 1–17 (MLVKTALFVTLIGLAQA), serve as a signal peptide directing secretion. A disordered region spans residues 19-67 (PLPAKSSGSEDTYDSHPQYSFNYDVQDPETGDVKSQSESRDGDVVHGQY). Over residues 24–41 (SSGSEDTYDSHPQYSFNY) the composition is skewed to polar residues. The Chitin-binding type R&amp;R domain occupies 34–100 (HPQYSFNYDV…AVVRREPLSS (67 aa)). Basic and acidic residues predominate over residues 49–62 (GDVKSQSESRDGDV).

In terms of tissue distribution, imaginal (anterior) epidermis.

Component of the cuticle of the pupa of fruit fly. This chain is Pupal cuticle protein Edg-84A (Edg84A), found in Drosophila melanogaster (Fruit fly).